Reading from the N-terminus, the 353-residue chain is L-tryptophan dehydrogenase (353 aa).

NAD(+) is bound at residue Arg44. Residue Lys80 is the Proton donor/acceptor of the active site. NAD(+)-binding positions include Asp114, Thr146, 176 to 181, Lys204, and 255 to 257; these read GLGNVG and AAN.

Belongs to the Glu/Leu/Phe/Val dehydrogenases family. In terms of assembly, homodimer.

It carries out the reaction L-tryptophan + NAD(+) + H2O = indole-3-pyruvate + NH4(+) + NADH + H(+). Its function is as follows. Catalyzes the reversible oxidative deamination of L-tryptophan to indole-3-pyruvate in the presence of NAD(+). Cannot use other L-amino acids and D-Trp. Involved in the biosynthesis of scytonemin, a cyanobacterial radiation-absorbing pigment. This Nostoc punctiforme (strain ATCC 29133 / PCC 73102) protein is L-tryptophan dehydrogenase.